Consider the following 473-residue polypeptide: Ribulose bisphosphate carboxylase large chain 1 (473 aa).

2 residues coordinate substrate: N116 and T166. K168 (proton acceptor) is an active-site residue. K170 provides a ligand contact to substrate. Residues K194, D196, and E197 each contribute to the Mg(2+) site. Position 194 is an N6-carboxylysine (K194). The Proton acceptor role is filled by H287. Substrate-binding residues include R288, H320, and S372.

This sequence belongs to the RuBisCO large chain family. Type I subfamily. In terms of assembly, heterohexadecamer of 8 large chains and 8 small chains. Mg(2+) serves as cofactor.

It carries out the reaction 2 (2R)-3-phosphoglycerate + 2 H(+) = D-ribulose 1,5-bisphosphate + CO2 + H2O. The catalysed reaction is D-ribulose 1,5-bisphosphate + O2 = 2-phosphoglycolate + (2R)-3-phosphoglycerate + 2 H(+). Functionally, ruBisCO catalyzes two reactions: the carboxylation of D-ribulose 1,5-bisphosphate, the primary event in carbon dioxide fixation, as well as the oxidative fragmentation of the pentose substrate. Both reactions occur simultaneously and in competition at the same active site. This is Ribulose bisphosphate carboxylase large chain 1 from Acidithiobacillus ferrooxidans (strain ATCC 23270 / DSM 14882 / CIP 104768 / NCIMB 8455) (Ferrobacillus ferrooxidans (strain ATCC 23270)).